The chain runs to 180 residues: Ribulose bisphosphate carboxylase small subunit, chloroplastic 1 (180 aa).

The transit peptide at 1–56 directs the protein to the chloroplast; the sequence is MASSVISSAAVATRTNVAQASMVAPFNGLKSAVSFPVSSKQNLDITSIASNGGRVQ.

The protein belongs to the RuBisCO small chain family. Heterohexadecamer of 8 large and 8 small subunits.

It localises to the plastid. The protein resides in the chloroplast. In terms of biological role, ruBisCO catalyzes two reactions: the carboxylation of D-ribulose 1,5-bisphosphate, the primary event in carbon dioxide fixation, as well as the oxidative fragmentation of the pentose substrate. Both reactions occur simultaneously and in competition at the same active site. Although the small subunit is not catalytic it is essential for maximal activity. In Petunia hybrida (Petunia), this protein is Ribulose bisphosphate carboxylase small subunit, chloroplastic 1.